The following is a 460-amino-acid chain: Argininosuccinate lyase (460 aa).

It belongs to the lyase 1 family. Argininosuccinate lyase subfamily.

It is found in the cytoplasm. It catalyses the reaction 2-(N(omega)-L-arginino)succinate = fumarate + L-arginine. The protein operates within amino-acid biosynthesis; L-arginine biosynthesis; L-arginine from L-ornithine and carbamoyl phosphate: step 3/3. The protein is Argininosuccinate lyase of Limosilactobacillus fermentum (strain NBRC 3956 / LMG 18251) (Lactobacillus fermentum).